A 357-amino-acid chain; its full sequence is Hydroxyproline O-arabinosyltransferase RDN1 (357 aa).

Residues 13 to 33 (LLMLLMVLGFSFATYNLVFMM) traverse the membrane as a helical; Signal-anchor segment.

In terms of tissue distribution, expressed in the vasculature of leaves, petioles, stems and roots. Expressed in the vascular cylinder throughout the root, and nodule vasculature.

The protein resides in the golgi apparatus membrane. It carries out the reaction trans-4-hydroxy-L-prolyl-[protein] + UDP-beta-L-arabinofuranose = O-(beta-L-arabinofuranosyl)-trans-4-hydroxy-L-prolyl-[protein] + UDP + H(+). Its function is as follows. Probable glycosyltransferase involved in the O-arabinosylation of several proteins including extensins and small signaling peptides. Catalyzes the transfer of the initial L-arabinose to the hydroxyl group of Hyp residues. Probably involved in the arabinosylation of CLE12, a signaling peptide that moves from root to shoot, to interact with SUNN receptor kinase signaling that regulates nodulation. Involved in long distance nodulation signaling events. Involved in the autoregulation of nodulation (AON), a long distance systemic signaling from root to shoot and back again, which allows legumes to limit the number of root nodules formed based on available nitrogen and previous rhizobial colonization. Functions in the root, upstream of the shoot receptor kinase SUNN and via CLE peptide, to control AON. The polypeptide is Hydroxyproline O-arabinosyltransferase RDN1 (Medicago truncatula (Barrel medic)).